A 381-amino-acid polypeptide reads, in one-letter code: Succinyl-diaminopimelate desuccinylase (381 aa).

Histidine 72 serves as a coordination point for Zn(2+). Residue aspartate 74 is part of the active site. Aspartate 103 lines the Zn(2+) pocket. Catalysis depends on glutamate 133, which acts as the Proton acceptor. Glutamate 134, glutamate 163, and histidine 348 together coordinate Zn(2+).

The protein belongs to the peptidase M20A family. DapE subfamily. As to quaternary structure, homodimer. Zn(2+) is required as a cofactor. Requires Co(2+) as cofactor.

The catalysed reaction is N-succinyl-(2S,6S)-2,6-diaminopimelate + H2O = (2S,6S)-2,6-diaminopimelate + succinate. It functions in the pathway amino-acid biosynthesis; L-lysine biosynthesis via DAP pathway; LL-2,6-diaminopimelate from (S)-tetrahydrodipicolinate (succinylase route): step 3/3. Its function is as follows. Catalyzes the hydrolysis of N-succinyl-L,L-diaminopimelic acid (SDAP), forming succinate and LL-2,6-diaminopimelate (DAP), an intermediate involved in the bacterial biosynthesis of lysine and meso-diaminopimelic acid, an essential component of bacterial cell walls. This is Succinyl-diaminopimelate desuccinylase from Anaplasma marginale (strain Florida).